Consider the following 374-residue polypeptide: Queuine tRNA-ribosyltransferase (374 aa).

D89 (proton acceptor) is an active-site residue. Residues 89–93 (DSGGF), D143, Q187, and G214 each bind substrate. The interval 245 to 251 (GVGKPED) is RNA binding. The Nucleophile role is filled by D264. The interval 269–273 (TRNAR) is RNA binding; important for wobble base 34 recognition. Zn(2+) contacts are provided by C302, C304, C307, and H333.

Belongs to the queuine tRNA-ribosyltransferase family. As to quaternary structure, homodimer. Within each dimer, one monomer is responsible for RNA recognition and catalysis, while the other monomer binds to the replacement base PreQ1. Zn(2+) is required as a cofactor.

The catalysed reaction is 7-aminomethyl-7-carbaguanine + guanosine(34) in tRNA = 7-aminomethyl-7-carbaguanosine(34) in tRNA + guanine. Its pathway is tRNA modification; tRNA-queuosine biosynthesis. Functionally, catalyzes the base-exchange of a guanine (G) residue with the queuine precursor 7-aminomethyl-7-deazaguanine (PreQ1) at position 34 (anticodon wobble position) in tRNAs with GU(N) anticodons (tRNA-Asp, -Asn, -His and -Tyr). Catalysis occurs through a double-displacement mechanism. The nucleophile active site attacks the C1' of nucleotide 34 to detach the guanine base from the RNA, forming a covalent enzyme-RNA intermediate. The proton acceptor active site deprotonates the incoming PreQ1, allowing a nucleophilic attack on the C1' of the ribose to form the product. After dissociation, two additional enzymatic reactions on the tRNA convert PreQ1 to queuine (Q), resulting in the hypermodified nucleoside queuosine (7-(((4,5-cis-dihydroxy-2-cyclopenten-1-yl)amino)methyl)-7-deazaguanosine). The polypeptide is Queuine tRNA-ribosyltransferase (Shewanella sp. (strain MR-4)).